We begin with the raw amino-acid sequence, 286 residues long: Cytochrome bo(3) ubiquinol oxidase subunit 2 (286 aa).

The first 24 residues, methionine 1–glycine 24, serve as a signal peptide directing secretion. Cysteine 25 carries N-palmitoyl cysteine lipidation. A lipid anchor (S-diacylglycerol cysteine) is attached at cysteine 25. The Extracellular portion of the chain corresponds to cysteine 25–leucine 44. The chain crosses the membrane as a helical span at residues phenylalanine 45–leucine 67. At arginine 68–serine 85 the chain is on the cytoplasmic side. The chain crosses the membrane as a helical span at residues asparagine 86–tryptophan 108. The Extracellular segment spans residues lysine 109–leucine 286.

This sequence belongs to the cytochrome c oxidase subunit 2 family. As to quaternary structure, heterooctamer of two A chains, two B chains, two C chains and two D chains.

It is found in the cell membrane. Functionally, cytochrome bo(3) ubiquinol terminal oxidase is the component of the aerobic respiratory chain of E.coli that predominates when cells are grown at high aeration. Has proton pump activity across the membrane in addition to electron transfer, pumping 2 protons/electron. The sequence is that of Cytochrome bo(3) ubiquinol oxidase subunit 2 (cyoA) from Buchnera aphidicola subsp. Baizongia pistaciae (strain Bp).